Reading from the N-terminus, the 317-residue chain is Acetyl-coenzyme A carboxylase carboxyl transferase subunit alpha (317 aa).

In terms of domain architecture, CoA carboxyltransferase C-terminal spans 43 to 293 (RVRESMADIY…GDVISNALGE (251 aa)).

Belongs to the AccA family. In terms of assembly, acetyl-CoA carboxylase is a heterohexamer composed of biotin carboxyl carrier protein (AccB), biotin carboxylase (AccC) and two subunits each of ACCase subunit alpha (AccA) and ACCase subunit beta (AccD).

It localises to the cytoplasm. It carries out the reaction N(6)-carboxybiotinyl-L-lysyl-[protein] + acetyl-CoA = N(6)-biotinyl-L-lysyl-[protein] + malonyl-CoA. Its pathway is lipid metabolism; malonyl-CoA biosynthesis; malonyl-CoA from acetyl-CoA: step 1/1. Component of the acetyl coenzyme A carboxylase (ACC) complex. First, biotin carboxylase catalyzes the carboxylation of biotin on its carrier protein (BCCP) and then the CO(2) group is transferred by the carboxyltransferase to acetyl-CoA to form malonyl-CoA. In Rhizobium rhizogenes (strain K84 / ATCC BAA-868) (Agrobacterium radiobacter), this protein is Acetyl-coenzyme A carboxylase carboxyl transferase subunit alpha.